The primary structure comprises 561 residues: MKLFITITPNLEKLLHNEIKDILRTNKLTLPKFQVFEGGIEIDLTKDPNISEQEKEYYLWSISNCSRLAESIRIRVGLSFPCKNFSQFNINLEKLDYKTYFPTSSIEPQVAVSCNASTLYHTNAIKERFIKHFNNSIKDKISIDINYSKFKPIKKLLKNLRYKLRKIQNPNDDEIIGGGDDHEIIGDDEELSEEEILNRIDKLQIELEQVIGKQKNIPQSKVFIRIDQNVGQLSVDACTSGEGQLLHKRTLNKHISDAPIRETLASAIIMAIISSTRRVGSGTTEGSYLDLNKTNIWDPFVGSGTLIQEAISMLLKAKPSSCTNYKRSFQFERFKNHSTERYLKYLESINKPISPLIKNTILIGSDIDQKAIDSSIFNLSKQGYQHENIKFFKGDFKSIYLDQINIDNSLDDDGDNNNNKPFTIITNLPYGTRVLNRNQPQQQQNQPIQPKATKIKEGENYYEDDDDDDFFSIRSPKKDNVNIYLNNSISKDLRDLFKRFGDMIHESNESVLRDVFVLNGNSHFQSISTNNGKNNFEWERILNFRNGGLTVELLKMVKKPN.

Positions 187 to 217 form a coiled coil; it reads DDEELSEEEILNRIDKLQIELEQVIGKQKNI.

This is an uncharacterized protein from Dictyostelium discoideum (Social amoeba).